The sequence spans 498 residues: ATP synthase subunit beta, chloroplastic (498 aa).

Position 172-179 (Gly-172–Thr-179) interacts with ATP.

This sequence belongs to the ATPase alpha/beta chains family. F-type ATPases have 2 components, CF(1) - the catalytic core - and CF(0) - the membrane proton channel. CF(1) has five subunits: alpha(3), beta(3), gamma(1), delta(1), epsilon(1). CF(0) has four main subunits: a(1), b(1), b'(1) and c(9-12).

The protein resides in the plastid. It localises to the chloroplast thylakoid membrane. The enzyme catalyses ATP + H2O + 4 H(+)(in) = ADP + phosphate + 5 H(+)(out). Produces ATP from ADP in the presence of a proton gradient across the membrane. The catalytic sites are hosted primarily by the beta subunits. This Canella winterana (Wild cinnamon) protein is ATP synthase subunit beta, chloroplastic.